We begin with the raw amino-acid sequence, 155 residues long: uncharacterized protein (155 aa).

Residues 7-154 (LQINYKTLEE…VWLPESVELQ (148 aa)) enclose the N-acetyltransferase domain.

This is an uncharacterized protein from Brevibacillus brevis (strain 47 / JCM 6285 / NBRC 100599).